A 163-amino-acid chain; its full sequence is NADH-quinone oxidoreductase subunit I (163 aa).

2 4Fe-4S ferredoxin-type domains span residues 54–84 (LRRY…IESE) and 94–123 (TRYD…ETRI). 8 residues coordinate [4Fe-4S] cluster: Cys-64, Cys-67, Cys-70, Cys-74, Cys-103, Cys-106, Cys-109, and Cys-113.

The protein belongs to the complex I 23 kDa subunit family. NDH-1 is composed of 14 different subunits. Subunits NuoA, H, J, K, L, M, N constitute the membrane sector of the complex. It depends on [4Fe-4S] cluster as a cofactor.

It localises to the cell inner membrane. It catalyses the reaction a quinone + NADH + 5 H(+)(in) = a quinol + NAD(+) + 4 H(+)(out). Its function is as follows. NDH-1 shuttles electrons from NADH, via FMN and iron-sulfur (Fe-S) centers, to quinones in the respiratory chain. The immediate electron acceptor for the enzyme in this species is believed to be ubiquinone. Couples the redox reaction to proton translocation (for every two electrons transferred, four hydrogen ions are translocated across the cytoplasmic membrane), and thus conserves the redox energy in a proton gradient. This chain is NADH-quinone oxidoreductase subunit I, found in Methylobacillus flagellatus (strain ATCC 51484 / DSM 6875 / VKM B-1610 / KT).